The primary structure comprises 336 residues: Fructose-1,6-bisphosphatase class 1 (336 aa).

Positions 90, 112, 114, and 115 each coordinate Mg(2+). Substrate-binding positions include 115 to 118, Asn-211, and Lys-277; that span reads DGSS. Glu-283 is a binding site for Mg(2+).

This sequence belongs to the FBPase class 1 family. As to quaternary structure, homotetramer. Requires Mg(2+) as cofactor.

The protein resides in the cytoplasm. The catalysed reaction is beta-D-fructose 1,6-bisphosphate + H2O = beta-D-fructose 6-phosphate + phosphate. It participates in carbohydrate biosynthesis; gluconeogenesis. In Pseudomonas fluorescens (strain ATCC BAA-477 / NRRL B-23932 / Pf-5), this protein is Fructose-1,6-bisphosphatase class 1.